We begin with the raw amino-acid sequence, 379 residues long: Succinyl-diaminopimelate desuccinylase (379 aa).

Residue His70 participates in Zn(2+) binding. Asp72 is an active-site residue. Zn(2+) is bound at residue Asp103. Catalysis depends on Glu137, which acts as the Proton acceptor. Zn(2+)-binding residues include Glu138, Glu166, and His352.

This sequence belongs to the peptidase M20A family. DapE subfamily. Homodimer. Requires Zn(2+) as cofactor. It depends on Co(2+) as a cofactor.

It catalyses the reaction N-succinyl-(2S,6S)-2,6-diaminopimelate + H2O = (2S,6S)-2,6-diaminopimelate + succinate. Its pathway is amino-acid biosynthesis; L-lysine biosynthesis via DAP pathway; LL-2,6-diaminopimelate from (S)-tetrahydrodipicolinate (succinylase route): step 3/3. Functionally, catalyzes the hydrolysis of N-succinyl-L,L-diaminopimelic acid (SDAP), forming succinate and LL-2,6-diaminopimelate (DAP), an intermediate involved in the bacterial biosynthesis of lysine and meso-diaminopimelic acid, an essential component of bacterial cell walls. The polypeptide is Succinyl-diaminopimelate desuccinylase (Burkholderia lata (strain ATCC 17760 / DSM 23089 / LMG 22485 / NCIMB 9086 / R18194 / 383)).